Consider the following 175-residue polypeptide: Ribosome maturation factor RimM (175 aa).

Residues 100–173 (EGEYYFHEII…IIIIRPMEGL (74 aa)) form the PRC barrel domain.

It belongs to the RimM family. As to quaternary structure, binds ribosomal protein uS19.

The protein resides in the cytoplasm. Functionally, an accessory protein needed during the final step in the assembly of 30S ribosomal subunit, possibly for assembly of the head region. Essential for efficient processing of 16S rRNA. May be needed both before and after RbfA during the maturation of 16S rRNA. It has affinity for free ribosomal 30S subunits but not for 70S ribosomes. In Geobacillus thermodenitrificans (strain NG80-2), this protein is Ribosome maturation factor RimM.